Consider the following 155-residue polypeptide: MRLMRNLMNALLLGAAASSLAVAADRDGEYRLNELQSTDAGYRKAWQNLVEDESRLPDWVMNLSGTATPMHAVDDQGDKYLVGGLCEKSDCKGQRLLVAFDWDKSHAYGLYVQVPEGLPQDKSPSKHASFRWLGKPEPAVQKILDEQLKADPNWY.

The N-terminal stretch at 1–23 is a signal peptide; that stretch reads MRLMRNLMNALLLGAAASSLAVA. Cysteines 86 and 91 form a disulfide.

This sequence belongs to the ivy family.

Its subcellular location is the periplasm. This is an uncharacterized protein from Pseudomonas aeruginosa (strain ATCC 15692 / DSM 22644 / CIP 104116 / JCM 14847 / LMG 12228 / 1C / PRS 101 / PAO1).